The primary structure comprises 146 residues: Myoglobin (146 aa).

Positions 2–140 constitute a Globin domain; that stretch reads ADLDAVLKCW…VIADLEANYK (139 aa). His59 provides a ligand contact to nitrite. Residue His59 coordinates O2. His88 provides a ligand contact to heme b.

The protein belongs to the globin family. As to quaternary structure, monomeric.

Its subcellular location is the cytoplasm. It is found in the sarcoplasm. The catalysed reaction is Fe(III)-heme b-[protein] + nitric oxide + H2O = Fe(II)-heme b-[protein] + nitrite + 2 H(+). The enzyme catalyses H2O2 + AH2 = A + 2 H2O. Functionally, monomeric heme protein which primary function is to store oxygen and facilitate its diffusion within muscle tissues. Reversibly binds oxygen through a pentacoordinated heme iron and enables its timely and efficient release as needed during periods of heightened demand. Depending on the oxidative conditions of tissues and cells, and in addition to its ability to bind oxygen, it also has a nitrite reductase activity whereby it regulates the production of bioactive nitric oxide. Under stress conditions, like hypoxia and anoxia, it also protects cells against reactive oxygen species thanks to its pseudoperoxidase activity. This Katsuwonus pelamis (Skipjack tuna) protein is Myoglobin (mb).